Consider the following 334-residue polypeptide: Kihadalactone A synthase LFS (334 aa).

Residues 181 to 286 (KTASYSNMFH…RYSTGLFLCP (106 aa)) form the Fe2OG dioxygenase domain. The Fe cation site is built by H208, D210, and H269. R277 contacts 2-oxoglutarate.

This sequence belongs to the iron/ascorbate-dependent oxidoreductase family. It depends on Fe(2+) as a cofactor. Expressed in maturing fruits and in juice vesicles.

It carries out the reaction (1R,2R,3S,8R,10R,11R,15S,16S)-3-(acetyloxy)-15-(1-hydroxy-4-oxobutan-2-yl)-2,7,7,11,16-pentamethyl-5-oxo-6-oxatetracyclo[9.7.0.0(2,8).0(12,16)]octadec-12-en-10-yl acetate + 2-oxoglutarate + O2 = kihadalactone A + succinate + CO2 + 2 H2O. The protein operates within secondary metabolite biosynthesis; terpenoid biosynthesis. Functionally, 2-oxoglutarate-Fe(II) type oxidoreductase involved in the biosynthesis of limonoids triterpene natural products such as limonin, a compound with insecticidal activity responsible for the bitter taste in citrus. Catalyzes the formation of kihadalactone A. The polypeptide is Kihadalactone A synthase LFS (Citrus sinensis (Sweet orange)).